The sequence spans 330 residues: Spondin-2 (330 aa).

The signal sequence occupies residues M1–G25. In terms of domain architecture, Spondin spans G30–P220. The cysteines at positions 34 and 170 are disulfide-linked. E140 contacts a divalent metal cation. Ca(2+) is bound by residues D159, D187, and D191. Positions D276–V330 constitute a TSP type-1 domain. A C-linked (Man) tryptophan glycan is attached at W282.

In terms of assembly, monomer. Interacts with integrin. As to expression, abundantly expressed in the developing hippocampus.

The protein resides in the secreted. It localises to the extracellular space. The protein localises to the extracellular matrix. Cell adhesion protein that promotes adhesion and outgrowth of hippocampal embryonic neurons. Binds directly to bacteria and their components and functions as an opsonin for macrophage phagocytosis of bacteria. Essential in the initiation of the innate immune response and represents a unique pattern-recognition molecule in the ECM for microbial pathogens. This Rattus norvegicus (Rat) protein is Spondin-2 (Spon2).